Reading from the N-terminus, the 183-residue chain is Adenine phosphoribosyltransferase (183 aa).

The protein belongs to the purine/pyrimidine phosphoribosyltransferase family. As to quaternary structure, homodimer.

The protein localises to the cytoplasm. The enzyme catalyses AMP + diphosphate = 5-phospho-alpha-D-ribose 1-diphosphate + adenine. Its pathway is purine metabolism; AMP biosynthesis via salvage pathway; AMP from adenine: step 1/1. Functionally, catalyzes a salvage reaction resulting in the formation of AMP, that is energically less costly than de novo synthesis. This chain is Adenine phosphoribosyltransferase, found in Klebsiella pneumoniae subsp. pneumoniae (strain ATCC 700721 / MGH 78578).